The following is a 94-amino-acid chain: MDKETLRALHVIVKGRVQGVGFRYWTRSLAKSLNVKGRVRNLADYSVEIIAEADTDTLGEFVYALKHEHPYARVESLNSEEVRARGYTDFRIEV.

Positions 8–94 (ALHVIVKGRV…RGYTDFRIEV (87 aa)) constitute an Acylphosphatase-like domain. Catalysis depends on residues Arg23 and Asn41.

This sequence belongs to the acylphosphatase family.

The catalysed reaction is an acyl phosphate + H2O = a carboxylate + phosphate + H(+). In Treponema denticola (strain ATCC 35405 / DSM 14222 / CIP 103919 / JCM 8153 / KCTC 15104), this protein is Acylphosphatase (acyP).